The following is a 354-amino-acid chain: Small ribosomal subunit protein uS2 (354 aa).

It belongs to the universal ribosomal protein uS2 family.

This chain is Small ribosomal subunit protein uS2, found in Methylorubrum populi (strain ATCC BAA-705 / NCIMB 13946 / BJ001) (Methylobacterium populi).